The following is a 276-amino-acid chain: Halorhodopsin (276 aa).

Positions 1-21 (MTAVSTTATTVLQATQSDVLQ) are excised as a propeptide. Residues 22–25 (EIQS) are Extracellular-facing. Residues 26–51 (NFLLNSSIWVNIALAGVVILLFVAMG) form a helical membrane-spanning segment. Over 52 to 57 (RDLESP) the chain is Cytoplasmic. The helical transmembrane segment at 58-81 (RAKLIWVATMLVPLVSISSYAGLA) threads the bilayer. Over 82 to 105 (SGLTVGFLQMPPGHALAGQEVLSP) the chain is Extracellular. A helical membrane pass occupies residues 106-127 (WGRYLTWTFSTPMILLALGLLA). Residues 128–130 (DTD) are Cytoplasmic-facing. Residues 131–154 (IASLFTAITMDIGMCVTGLAAALI) form a helical membrane-spanning segment. The Extracellular portion of the chain corresponds to 155–157 (TSS). Residues 158 to 180 (HLLRWVFYGISCAFFVAVLYVLL) traverse the membrane as a helical segment. Residues 181-192 (VQWPADAEAAGT) lie on the Cytoplasmic side of the membrane. Residues 193–216 (SEIFGTLKILTVVLWLGYPILWAL) form a helical membrane-spanning segment. Residues 217-225 (GSEGVALLS) lie on the Extracellular side of the membrane. The helical transmembrane segment at 226 to 254 (VGVTSWGYSGLDILAKYVFAFLLLRWVAA) threads the bilayer. At K241 the chain carries N6-(retinylidene)lysine. Residues 255–276 (NEGTVSGSGMGIGSGGAAPADD) lie on the Cytoplasmic side of the membrane.

This sequence belongs to the archaeal/bacterial/fungal opsin family.

It localises to the cell membrane. Light-driven anion pump. The sequence is that of Halorhodopsin from Halobacterium halobium (strain shark).